Reading from the N-terminus, the 1142-residue chain is Auxin response factor 5 (1142 aa).

Residues 148 to 250 (FCKTLTASDT…QLLLGIRRAN (103 aa)) constitute a DNA-binding region (TF-B3). A PB1 domain is found at 1009 to 1093 (RTFTKVYKRG…RCIRILSPQE (85 aa)). The segment at 1114–1142 (SSSDGVNGWRPRCDQNPGNPSIGPYDQFE) is disordered.

This sequence belongs to the ARF family. Homodimers and heterodimers. Expressed in roots, culms, leaves and young panicles.

It is found in the nucleus. In terms of biological role, auxin response factors (ARFs) are transcriptional factors that bind specifically to the DNA sequence 5'-TGTCTC-3' found in the auxin-responsive promoter elements (AuxREs). This chain is Auxin response factor 5 (ARF5), found in Oryza sativa subsp. japonica (Rice).